Reading from the N-terminus, the 156-residue chain is S-ribosylhomocysteine lyase (156 aa).

Residues histidine 53, histidine 57, and cysteine 122 each contribute to the Fe cation site.

The protein belongs to the LuxS family. As to quaternary structure, homodimer. It depends on Fe cation as a cofactor.

The enzyme catalyses S-(5-deoxy-D-ribos-5-yl)-L-homocysteine = (S)-4,5-dihydroxypentane-2,3-dione + L-homocysteine. Its function is as follows. Involved in the synthesis of autoinducer 2 (AI-2) which is secreted by bacteria and is used to communicate both the cell density and the metabolic potential of the environment. The regulation of gene expression in response to changes in cell density is called quorum sensing. Catalyzes the transformation of S-ribosylhomocysteine (RHC) to homocysteine (HC) and 4,5-dihydroxy-2,3-pentadione (DPD). This chain is S-ribosylhomocysteine lyase, found in Finegoldia magna (strain ATCC 29328 / DSM 20472 / WAL 2508) (Peptostreptococcus magnus).